We begin with the raw amino-acid sequence, 531 residues long: Splicing factor ESS-2 (531 aa).

Disordered stretches follow at residues 104-163 (RTPI…RKKK) and 453-531 (PFAS…GDFF). Residues 105-114 (TPITTRSTTE) are compositionally biased toward polar residues. Low complexity-rich tracts occupy residues 125–136 (TPGPSSASTSSA) and 464–477 (SRPSSSKRSTTPGS). Residues 480–498 (SRGSTTPGSSWSQGAQTPG) are compositionally biased toward polar residues.

Belongs to the ESS2 family.

The protein resides in the nucleus. Functionally, regulates pre-mRNA splicing. The chain is Splicing factor ESS-2 (ess-2) from Caenorhabditis elegans.